A 514-amino-acid polypeptide reads, in one-letter code: Serine/threonine-protein kinase 33 (514 aa).

Residues 65 to 86 (INRDITSRKDLPSRTSNVERKA) are compositionally biased toward basic and acidic residues. A disordered region spans residues 65-91 (INRDITSRKDLPSRTSNVERKASQQQW). Residues 116–381 (YTFGRILGKG…AKELLDNQWL (266 aa)) enclose the Protein kinase domain. Residues 122–130 (LGKGSFGIV) and Lys145 contribute to the ATP site. The active-site Proton acceptor is the Asp238. Disordered stretches follow at residues 402-468 (KNNP…DMCS) and 485-514 (MEKT…KKKL). A Phosphoserine modification is found at Ser407. Positions 413–426 (TEEKNKPSTEEKLK) are enriched in basic and acidic residues. Over residues 449–468 (STAYEKQFPATSKDNFDMCS) the composition is skewed to polar residues.

Belongs to the protein kinase superfamily. CAMK Ser/Thr protein kinase family. CaMK subfamily. As to quaternary structure, homodimer. Post-translationally, autophosphorylated. In terms of tissue distribution, highly expressed in testis, fetal lung and heart, followed by pituitary gland, kidney, interventricular septum, pancreas, heart, trachea, thyroid gland and uterus. Weak hybridization signals were observed in the following tissues: amygdala, aorta, esophagus, colon ascending, colon transverse, skeletal muscle, spleen, peripheral blood leukocyte, lymph node, bone marrow, placenta, prostate, liver, salivary gland, mammary gland, some tumor cell lines, fetal brain, fetal liver, fetal spleen and fetal thymus. No signal at all was detectable in RNA from tissues of the nervous system.

The protein localises to the cytoplasm. It localises to the cytoskeleton. The protein resides in the perinuclear region. The enzyme catalyses L-seryl-[protein] + ATP = O-phospho-L-seryl-[protein] + ADP + H(+). It catalyses the reaction L-threonyl-[protein] + ATP = O-phospho-L-threonyl-[protein] + ADP + H(+). With respect to regulation, specifically inhibited by CDD-2807 ((3-([1,1'-Biphenyl]-2-ylethynyl)-1H-indazol-5-yl)(2,6-diazaspiro[3.5]nonan-2-yl)methanone). Serine/threonine protein kinase required for spermatid differentiation and male fertility. Promotes sperm flagella assembly during spermatogenesis by mediating phosphorylation of fibrous sheath proteins AKAP3 and AKAP4. Also phosphorylates vimentin/VIM, thereby regulating the dynamic behavior of the intermediate filament cytoskeleton. The polypeptide is Serine/threonine-protein kinase 33 (Homo sapiens (Human)).